The sequence spans 422 residues: MFAFEEFSEQSICQARASVMVYDDTSKKWVPIKPGQQGFSRINIYHNTASNTFRVVGVKLQDQQVVINYSIVKGLKYNQATPTFHQWRDARQVYGLNFASKEEATTFSNAMLFALNIMNSQEGGPSSQRQVQNGPSPDEMDIQRRQVMEQHQQQRQESLERRTSATGPILPPGHPSSAASAPVSCSGPPPPPPPPVPPPPTGATPPPPPPLPAGGAQGSSHDESSVSGLAAAIAGAKLRRVQRPEDASGGSSPSGTSKSDANRASSGGGGGGLMEEMNKLLAKRRKAASQSDKPAEKKEDESQTEDPSTSPSPGTRAASQPPNSSEAGRKPWERSNSVEKPVSSILSRTPSVAKSPEAKSPLQSQPHSRMKPAGSVNDMALDAFDLDRMKQEILEEVVRELHKVKDEIIDAIRQELSGISTT.

Positions 4–118 (FEEFSEQSIC…NAMLFALNIM (115 aa)) constitute a WH1 domain. The span at 120-135 (SQEGGPSSQRQVQNGP) shows a compositional bias: polar residues. Disordered stretches follow at residues 120–139 (SQEG…SPDE) and 147–375 (VMEQ…PAGS). Ser-136 bears the Phosphoserine mark. Basic and acidic residues predominate over residues 147–163 (VMEQHQQQRQESLERRT). The segment covering 175–186 (PSSAASAPVSCS) has biased composition (low complexity). A compositionally biased stretch (pro residues) spans 187–212 (GPPPPPPPPVPPPPTGATPPPPPPLP). The tract at residues 228 to 248 (GLAAAIAGAKLRRVQRPEDAS) is EVH2 block A. Residues 228–419 (GLAAAIAGAK…DAIRQELSGI (192 aa)) form an EVH2 region. The short motif at 237–240 (KLRR) is the KLKR element. The span at 248–259 (SGGSSPSGTSKS) shows a compositional bias: low complexity. Phosphoserine occurs at positions 252 and 265. Residues 271-288 (GGLMEEMNKLLAKRRKAA) form an EVH2 block B region. Over residues 305–326 (EDPSTSPSPGTRAASQPPNSSE) the composition is skewed to polar residues. Phosphoserine is present on residues Ser-310, Ser-312, Ser-335, Ser-337, Ser-347, Ser-355, Ser-360, and Ser-375. Positions 327–337 (AGRKPWERSNS) are enriched in basic and acidic residues. The interval 348–368 (RTPSVAKSPEAKSPLQSQPHS) is required for interaction with ZDHHC17. Residues 385 to 419 (DLDRMKQEILEEVVRELHKVKDEIIDAIRQELSGI) are EVH2 block C. Residues 388-414 (RMKQEILEEVVRELHKVKDEIIDAIRQ) adopt a coiled-coil conformation.

This sequence belongs to the Ena/VASP family. Homotetramer. Binds to the SH3 domains of ABL1, LYN and SRC. Also binds to profilin, with preference for isoform IIa of PFN2, and the WW domain of APBB1/FE65. Binds to SEMA6A. Interacts, via the Pro-rich region, with the C-terminal SH3 domain of DNMBP. Interacts with RAPH1. Binds, via the EVH1 domain, the Pro-rich domain of Listeria monocytogenes actA. Binds, via the EVH1 domain, the Pro-rich domain of ZYX. Interacts with FYB1. Interacts with ZDHHC17. In terms of processing, phosphorylated by PKA; phosphorylation abolishes binding to SH3 domains of ABL and SRC.

It is found in the cytoplasm. The protein localises to the cytoskeleton. It localises to the stress fiber. The protein resides in the cell projection. Its subcellular location is the lamellipodium. Its function is as follows. Ena/VASP proteins are actin-associated proteins involved in a range of processes dependent on cytoskeleton remodeling and cell polarity such as axon guidance and lamellipodial and filopodial dynamics in migrating cells. EVL enhances actin nucleation and polymerization. The chain is Ena/VASP-like protein (EVL) from Pongo abelii (Sumatran orangutan).